Reading from the N-terminus, the 695-residue chain is Centrosomal protein of 89 kDa (695 aa).

3 disordered regions span residues 24 to 54 (LIPAATIAPRPAVPRTPPPRSPNPSPERPRS), 66 to 147 (TGRT…GDED), and 167 to 272 (AVPL…SEVL). The span at 34 to 49 (PAVPRTPPPRSPNPSP) shows a compositional bias: pro residues. Acidic residues-rich tracts occupy residues 124-146 (DEDDDEDDEGNDIDELEGLEGDE) and 178-189 (DSDVDEETEDSA). Polar residues predominate over residues 209 to 226 (GQTQPSSLPQPRSVSRRS). The segment covering 251–271 (TNKESPVRVNERDRSSEDSEV) has biased composition (basic and acidic residues). 2 coiled-coil regions span residues 276–368 (LEVQ…RYQA) and 406–632 (AYED…LEKE).

The protein localises to the cytoplasm. It is found in the cytosol. It localises to the cytoskeleton. The protein resides in the microtubule organizing center. Its subcellular location is the centrosome. The protein localises to the spindle pole. It is found in the centriole. It localises to the mitochondrion intermembrane space. Its function is as follows. Required for ciliogenesis. Also plays a role in mitochondrial metabolism where it may modulate complex IV activity. The polypeptide is Centrosomal protein of 89 kDa (cep89) (Danio rerio (Zebrafish)).